The sequence spans 303 residues: MVTEQEVEAVGQTLVDPGQPLQARFRALFTLRGLGGPVAISWISRAFDDDSALLKHELAYCLGQMQDRRAIPVLLDVLRDTRQEPMVRHEAGEALGAIGDPEVLEILKQYSTDPVVEVAETCQLAVRRLEWLQQHGGESAVRGPYLSVDPAPPAEERDLGQLREALLDEARPLFDRYRAMFALRDAGGKEAALALAEGLRCGSALFRHEIGYVLGQMQHEAAVPQLAAALAQPTENPMVRHECAEALGAIARPACLAALRAHVADPERVVRESCEVALDMYEYETGSTFQYADGLERLRSPLS.

M1 is subject to N-acetylmethionine. HEAT-like PBS-type repeat units follow at residues 23 to 49, 54 to 80, 87 to 113, 175 to 201, 206 to 232, and 239 to 265; these read ARFRALFTLRGLGGPVAISWISRAFDD, LKHELAYCLGQMQDRRAIPVLLDVLRD, VRHEAGEALGAIGDPEVLEILKQYSTD, DRYRAMFALRDAGGKEAALALAEGLRC, FRHEIGYVLGQMQHEAAVPQLAAALAQ, and VRHECAEALGAIARPACLAALRAHVAD. The Fe cation site is built by H56, H89, and E90. The Fe cation site is built by H208, H241, and E242.

Belongs to the deoxyhypusine hydroxylase family. Requires Fe(2+) as cofactor.

It catalyses the reaction [eIF5A protein]-deoxyhypusine + AH2 + O2 = [eIF5A protein]-hypusine + A + H2O. The protein operates within protein modification; eIF5A hypusination. Catalyzes the hydroxylation of the N(6)-(4-aminobutyl)-L-lysine intermediate produced by deoxyhypusine synthase/DHPS on a critical lysine of the eukaryotic translation initiation factor 5A/eIF-5A. This is the second step of the post-translational modification of that lysine into an unusual amino acid residue named hypusine. Hypusination is unique to mature eIF-5A factor and is essential for its function. The protein is Deoxyhypusine hydroxylase of Bos taurus (Bovine).